The following is a 362-amino-acid chain: Phosphoserine aminotransferase (362 aa).

L-glutamate is bound at residue R42. Residues 76–77, W102, T152, D173, and Q196 each bind pyridoxal 5'-phosphate; that span reads AS. N6-(pyridoxal phosphate)lysine is present on K197. Residue 238–239 coordinates pyridoxal 5'-phosphate; sequence NT.

It belongs to the class-V pyridoxal-phosphate-dependent aminotransferase family. SerC subfamily. Homodimer. Pyridoxal 5'-phosphate is required as a cofactor.

Its subcellular location is the cytoplasm. It catalyses the reaction O-phospho-L-serine + 2-oxoglutarate = 3-phosphooxypyruvate + L-glutamate. The catalysed reaction is 4-(phosphooxy)-L-threonine + 2-oxoglutarate = (R)-3-hydroxy-2-oxo-4-phosphooxybutanoate + L-glutamate. The protein operates within amino-acid biosynthesis; L-serine biosynthesis; L-serine from 3-phospho-D-glycerate: step 2/3. It functions in the pathway cofactor biosynthesis; pyridoxine 5'-phosphate biosynthesis; pyridoxine 5'-phosphate from D-erythrose 4-phosphate: step 3/5. Catalyzes the reversible conversion of 3-phosphohydroxypyruvate to phosphoserine and of 3-hydroxy-2-oxo-4-phosphonooxybutanoate to phosphohydroxythreonine. This is Phosphoserine aminotransferase from Chromobacterium violaceum (strain ATCC 12472 / DSM 30191 / JCM 1249 / CCUG 213 / NBRC 12614 / NCIMB 9131 / NCTC 9757 / MK).